We begin with the raw amino-acid sequence, 395 residues long: MGNCWGAKISSESPCRSASSPSGGTSKYASNSSVSAASVPPTPRSEDEILEAANVKAFAFNELRTATRNFRPDSVLGEGGFGSVFKGWIDEKTLAPTKPGTGMVIAVKKLNQEGHQGHREWLAEVNYLGQLSHPYLVRLVGYCVEDEQRLLVYEFMPRGSLENHLFRRSTHFQPLSWNLRMKIALGAAKGLAFLHSDKVKVIYRDFKTSNVLLDANYDAKLSDFGLAKDGPTGDKSHVSTRVMGTYGYAAPEYLATGHLTTKSDVYSFGVVLLEMLSGRRALDKNRPTGEHNLVEWARPYLMSKRRIFRILDARLGGQYSLAKAQKAATLALQCISVEAKNRPNMEQVVAVLEQLQDSKETGANPQLQKKSSSKNAGSNGSKPSSKGKPANARLV.

The tract at residues 1-45 is disordered; the sequence is MGNCWGAKISSESPCRSASSPSGGTSKYASNSSVSAASVPPTPRS. Low complexity-rich tracts occupy residues 10 to 22 and 29 to 39; these read SSES…SSPS and ASNSSVSAASV. The Protein kinase domain maps to 70-355; sequence FRPDSVLGEG…EQVVAVLEQL (286 aa). ATP is bound by residues 76–84 and lysine 108; that span reads LGEGGFGSV. Aspartate 205 serves as the catalytic Proton acceptor. Residues 359–395 form a disordered region; the sequence is KETGANPQLQKKSSSKNAGSNGSKPSSKGKPANARLV. A compositionally biased stretch (low complexity) spans 369-395; sequence KKSSSKNAGSNGSKPSSKGKPANARLV.

It belongs to the protein kinase superfamily. Ser/Thr protein kinase family. Interacts with CERK1.

It catalyses the reaction L-seryl-[protein] + ATP = O-phospho-L-seryl-[protein] + ADP + H(+). The enzyme catalyses L-threonyl-[protein] + ATP = O-phospho-L-threonyl-[protein] + ADP + H(+). Functionally, functions downstream of CERK1 in the microbial peptidoglycans (PGNs) and fungal chitin signaling pathways that mediate innate immunity. Participates in the activation of defense genes during response to PGN and chitin. This chain is Receptor-like cytoplasmic kinase 176, found in Oryza sativa subsp. japonica (Rice).